A 546-amino-acid chain; its full sequence is Nicotinic acid-CoA ligase olcI (546 aa).

194–205 (MFSTSGTSGLPK) contributes to the AMP binding site. The interval 445–523 (EIEAVLLKDP…ESLPRTGIGK (79 aa)) is AMP-binding.

The protein belongs to the ATP-dependent AMP-binding enzyme family.

It catalyses the reaction nicotinate + ATP + CoA = nicotinyl-CoA + AMP + diphosphate. It functions in the pathway secondary metabolite biosynthesis; terpenoid biosynthesis. Its function is as follows. Nicotinic acid-CoA ligase; part of the gene cluster that mediates the biosynthesis of 15-deoxyoxalicine B. The first step of the pathway is the synthesis of nicotinyl-CoA from nicotinic acid by the nicotinic acid-CoA ligase olcI. Nicotinyl-CoA is then a substrate of polyketide synthase olcA to produce 4-hydroxy-6-(3-pyridinyl)-2H-pyran-2-one (HPPO) which is further prenylated by the polyprenyl transferase olcH to yield geranylgeranyl-HPPO. Geranylgeranyl pyrophosphate is provided by the cluster-specific geranylgeranyl pyrophosphate synthase olcC. The FAD-dependent monooxygenase olcE catalyzes the epoxidation of geranylgeranyl-HPPO and the terpene cyclase olcD catalyzes the cyclization of the terpenoid component, resulting in the formation of the tricyclic terpene moiety seen in predecaturin E. The cytochrome P450 monooxygenase then catalyzes the allylic oxidation of predecaturin E, which is followed by spirocylization with concomitant loss of one molecule of water to form decaturin E. Decaturin E is the substrate of the cytochrome P450 monooxygenase olcJ which hydroxylates it at the C-29 position to form decaturin F. The short-chain dehydrogenase/reductase olcF may catalyze the oxidation of decaturin F to generate the 29-hydroxyl-27-one intermediate, and subsequent hemiacetal formation probably leads to the formation of decaturin C. The dioxygenase olcK may be a peroxisomal enzyme that catalyzes the hydroxylation of decaturin C into decaturin A once decaturin C is shuttled into the peroxisome by the MFS transporter olcL. Finally the cytochrome P450 monooxygenase olcB catalyzes the oxidative rearrangement to yield 15-deoxyoxalicine B. In the absence of olcJ, decaturin E may be shunted to a pathway in which it is oxidized to a ketone, possibly by olcF, to form decaturin D, which undergoes further allylic oxidation to yield decaturin G. Moreover, in the absence of oclK or oclL, oclB can convert decaturin C into 15-deoxyoxalicine A. The chain is Nicotinic acid-CoA ligase olcI from Penicillium canescens.